Consider the following 174-residue polypeptide: Chorion protein S18 (174 aa).

The signal sequence occupies residues 1 to 17 (MMKFMCIFICAVAAVSA). Low complexity predominate over residues 154–165 (AAAASSSVAGVA). The segment at 154–174 (AAAASSSVAGVAKKGYRKSSY) is disordered.

Belongs to the chorion protein S15/S18 family.

Its subcellular location is the secreted. Its function is as follows. Chorion membrane (egg shell) protein; plays a role in protecting the egg from the environment. The protein is Chorion protein S18 (Cp18) of Drosophila subobscura (Fruit fly).